A 200-amino-acid polypeptide reads, in one-letter code: Holliday junction resolvase RecU (200 aa).

The interval 1 to 24 (MTIRYPNGKRYDQASQPHKTPIKK) is disordered. Mg(2+) is bound by residues Thr85, Asp87, Glu100, and Gln119.

The protein belongs to the RecU family. Mg(2+) serves as cofactor.

It localises to the cytoplasm. It carries out the reaction Endonucleolytic cleavage at a junction such as a reciprocal single-stranded crossover between two homologous DNA duplexes (Holliday junction).. Its function is as follows. Endonuclease that resolves Holliday junction intermediates in genetic recombination. Cleaves mobile four-strand junctions by introducing symmetrical nicks in paired strands. Promotes annealing of linear ssDNA with homologous dsDNA. Required for DNA repair, homologous recombination and chromosome segregation. In Bacillus mycoides (strain KBAB4) (Bacillus weihenstephanensis), this protein is Holliday junction resolvase RecU.